Reading from the N-terminus, the 371-residue chain is Protein maelstrom 1 (371 aa).

Positions 2–68 (AQNKPNAFMA…VLERESKTER (67 aa)) form a DNA-binding region, HMG box.

Belongs to the maelstrom family.

Its subcellular location is the cytoplasm. It is found in the nucleus. In terms of biological role, involved both in the piRNA and miRNA metabolic processes. As a component of the meiotic nuage, plays a central role during oogenesis by repressing transposable elements and preventing their mobilization, which is essential for the germline integrity. Repression of transposable elements is mediated via the piRNA metabolic process, which mediates the repression of transposable elements during meiosis by forming complexes composed of piRNAs and Piwi proteins and governs the repression of transposons. As a nuclear component, it is required for proper differentiation in the germline stem cell (GSC) lineage by repressing microRNA-7 (miR-7), thereby acting as an indirect regulator of bag-of-marbles (Bam). Acts by binding to the promoter of miR-7 gene and repressing its expression; miR-7 repression alleviates the Bam repression by miR-7, thereby allowing differentiation in the germline stem cell (GSC) lineage. The chain is Protein maelstrom 1 (mael1) from Drosophila pseudoobscura pseudoobscura (Fruit fly).